Here is a 111-residue protein sequence, read N- to C-terminus: Large ribosomal subunit protein eL34B (111 aa).

The residue at position 76 (Tyr76) is a Phosphotyrosine.

It belongs to the eukaryotic ribosomal protein eL34 family. In terms of assembly, component of the large ribosomal subunit (LSU). Mature yeast ribosomes consist of a small (40S) and a large (60S) subunit. The 40S small subunit contains 1 molecule of ribosomal RNA (18S rRNA) and at least 33 different proteins. The large 60S subunit contains 3 rRNA molecules (25S, 5.8S and 5S rRNA) and at least 46 different proteins.

The protein localises to the cytoplasm. It is found in the nucleus. It localises to the nucleolus. Its function is as follows. Component of the ribosome, a large ribonucleoprotein complex responsible for the synthesis of proteins in the cell. The small ribosomal subunit (SSU) binds messenger RNAs (mRNAs) and translates the encoded message by selecting cognate aminoacyl-transfer RNA (tRNA) molecules. The large subunit (LSU) contains the ribosomal catalytic site termed the peptidyl transferase center (PTC), which catalyzes the formation of peptide bonds, thereby polymerizing the amino acids delivered by tRNAs into a polypeptide chain. The nascent polypeptides leave the ribosome through a tunnel in the LSU and interact with protein factors that function in enzymatic processing, targeting, and the membrane insertion of nascent chains at the exit of the ribosomal tunnel. The sequence is that of Large ribosomal subunit protein eL34B (rpl3402) from Schizosaccharomyces pombe (strain 972 / ATCC 24843) (Fission yeast).